Consider the following 647-residue polypeptide: MTECFLPPTSSPSEHRRAEHGSGLTRTPSSEEISPTKFPELYRTGEPSPPHDILHEPPDIVSDDEKDHGKKKGKFKKKEKRTEGYVAFQEDSSGDEAESPSKMKRSKGIHVFKKPSFSKKKEKDFKIKEKPKEEKHKEEKHKEEKHKEKKCKDFTAADVVKQWKEKKKKKKPTQEPEVPQTDAPSLRPIFGAPFADAVERTMMYDGIRLPAVFRECVDYMEKHGMKCEGIYRVSGIKSKVDELKAAYDREESPNLEEYEPNTVASLLKQYLRDLPENLLTKELMPRFEEACGRTTEVEKVQEFQRLLRELPEYNHLLLSWLIVHMDHVIAKELETKMNIQNISIVLSPTVQISNRVLYVLFTHVQELFGTVLLKQVTRPLRWSNMATMPTLPETQAGIKEEIRRQEFLLNCLHRDLQGGIKDFSKEERLWEVQRILTALKRKLREAKRQECETKIAQEIASLSKEDVSKEETNENEEVINILLAQENEILTEQEELLAMEQFLRRQIASEKEEIDRLRAEIAEIQSRQHGRSETEEYSSDSESESEDEEELQIILEDLQRQNEELEIKNNHLNQAVHEEREAIVELRVQLRLLQMLRAKSEQQLQEEEEPERRGGTGPLPCEGVLEVRAAKEQAKPSPSKDRKETPI.

Disordered stretches follow at residues 1 to 151 and 163 to 186; these read MTEC…EKKC and WKEK…APSL. At T2 the chain carries N-acetylthreonine. The span at 24–33 shows a compositional bias: polar residues; that stretch reads LTRTPSSEEI. 3 positions are modified to phosphoserine: S29, S30, and S34. T44 is subject to Phosphothreonine. 2 positions are modified to phosphoserine: S48 and S62. The segment covering 52–68 has biased composition (basic and acidic residues); sequence DILHEPPDIVSDDEKDH. Residue 69-74 coordinates ATP; that stretch reads GKKKGK. Basic residues predominate over residues 69–79; that stretch reads GKKKGKFKKKE. A phosphoserine mark is found at S92 and S93. Basic residues predominate over residues 102-118; sequence KMKRSKGIHVFKKPSFS. Residues 102 to 119 are nuclear localization signal; the sequence is KMKRSKGIHVFKKPSFSK. Over residues 119–151 the composition is skewed to basic and acidic residues; the sequence is KKKEKDFKIKEKPKEEKHKEEKHKEEKHKEKKC. A mediates association with membranes and could form transmembrane domains region spans residues 154–219; sequence FTAADVVKQW…PAVFRECVDY (66 aa). One can recognise a Rho-GAP domain in the interval 192–380; sequence APFADAVERT…VLLKQVTRPL (189 aa). The interval 403 to 499 is mediates interaction with RALA and RALB; sequence RRQEFLLNCL…LTEQEELLAM (97 aa). 418–425 is an ATP binding site; sequence GGIKDFSK. Residues S461 and S463 each carry the phosphoserine modification. The interval 500 to 647 is mediates interaction with REPS1 and REPS2; the sequence is EQFLRRQIAS…PSKDRKETPI (148 aa). Disordered stretches follow at residues 525 to 550 and 601 to 647; these read QSRQ…DEEE and EQQL…ETPI. Residues 535–550 show a composition bias toward acidic residues; the sequence is EEYSSDSESESEDEEE. The segment covering 628–647 has biased composition (basic and acidic residues); it reads RAAKEQAKPSPSKDRKETPI. S637 carries the phosphoserine modification.

Interacts with the GTP-bound form of RALA (via effector domain); during mitosis, recruits RALBP1 to the mitochondrion where it promotes DNM1L phosphorylation and mitochondrial fission. Interacts with DNM1L; mediates its mitotic kinase cyclin B-CDK1-mediated phosphorylation during mitosis to promote mitochondrial fission. Interacts with the mitotic kinase cyclin B-CDK1 during mitosis. Interacts with the GTP-bound form of RALB (via effector domain). Interacts with REPS1; the interaction is direct and does not affect RALA-binding nor GTPase activator activity of RALBP1. Interacts with REPS2; the interaction is direct and does not affect RALA-binding nor GTPase activator activity of RALBP1. Interacts with EPN1, NUMB and TFAP2A during interphase and mitosis. Interacts with AP2M1; as part of the AP2 complex. Interacts with CDC42. Interacts with RAC1. Post-translationally, tyrosine-phosphorylated upon stimulation of cells with EGF. In terms of processing, may undergo proteolytic cleavage to give peptides which reassemble to form a transporter complex. In terms of tissue distribution, ubiquitously expressed.

The protein resides in the cell membrane. It is found in the cytoplasm. The protein localises to the cytosol. It localises to the cytoskeleton. Its subcellular location is the spindle pole. The protein resides in the nucleus. It is found in the mitochondrion. It catalyses the reaction an S-substituted glutathione(in) + ATP + H2O = an S-substituted glutathione(out) + ADP + phosphate + H(+). It carries out the reaction ATP + H2O + xenobioticSide 1 = ADP + phosphate + xenobioticSide 2.. The catalysed reaction is leukotriene C4(in) + ATP + H2O = leukotriene C4(out) + ADP + phosphate + H(+). Functionally, multifunctional protein that functions as a downstream effector of RALA and RALB. As a GTPase-activating protein/GAP can inactivate CDC42 and RAC1 by stimulating their GTPase activity. As part of the Ral signaling pathway, may also regulate ligand-dependent EGF and insulin receptors-mediated endocytosis. During mitosis, may act as a scaffold protein in the phosphorylation of EPSIN/EPN1 by the mitotic kinase cyclin B-CDK1, preventing endocytosis during that phase of the cell cycle. During mitosis, also controls mitochondrial fission as an effector of RALA. Recruited to mitochondrion by RALA, acts as a scaffold to foster the mitotic kinase cyclin B-CDK1-mediated phosphorylation and activation of DNM1L. Could also function as a primary ATP-dependent active transporter for glutathione conjugates of electrophiles. May also actively catalyze the efflux of a wide range of substrates including xenobiotics like doxorubicin (DOX) contributing to cell multidrug resistance. The sequence is that of RalA-binding protein 1 from Rattus norvegicus (Rat).